The following is a 361-amino-acid chain: Phospho-N-acetylmuramoyl-pentapeptide-transferase (361 aa).

10 helical membrane-spanning segments follow: residues 28–48, 74–94, 99–119, 133–153, 168–188, 203–223, 236–256, 263–283, 288–308, and 338–358; these read LAIIITLSISFVTGPILIKFL, TMGGIMIILSSCLSTLLLADL, IWITLFGFISFGIIGFMDDYA, SKFLLQGIISLIIYVLLEYLD, LSLDLNYFYMVFAIFVIVGSS, VPIAFTAGSFALISYLVGNLI, TGELTVLCAGLVGSCLGFLWF, VFMGDTGSLSLGGVLGIISVI, IVLAIIGGLFVIETTSVILQV, and KVVIRFWIISVIFSLIGLSSL.

The protein belongs to the glycosyltransferase 4 family. MraY subfamily. It depends on Mg(2+) as a cofactor.

It localises to the cell inner membrane. The catalysed reaction is UDP-N-acetyl-alpha-D-muramoyl-L-alanyl-gamma-D-glutamyl-meso-2,6-diaminopimeloyl-D-alanyl-D-alanine + di-trans,octa-cis-undecaprenyl phosphate = di-trans,octa-cis-undecaprenyl diphospho-N-acetyl-alpha-D-muramoyl-L-alanyl-D-glutamyl-meso-2,6-diaminopimeloyl-D-alanyl-D-alanine + UMP. It participates in cell wall biogenesis; peptidoglycan biosynthesis. Functionally, catalyzes the initial step of the lipid cycle reactions in the biosynthesis of the cell wall peptidoglycan: transfers peptidoglycan precursor phospho-MurNAc-pentapeptide from UDP-MurNAc-pentapeptide onto the lipid carrier undecaprenyl phosphate, yielding undecaprenyl-pyrophosphoryl-MurNAc-pentapeptide, known as lipid I. The sequence is that of Phospho-N-acetylmuramoyl-pentapeptide-transferase from Rickettsia prowazekii (strain Madrid E).